The primary structure comprises 408 residues: Energy-coupling factor transporter ATP-binding protein EcfA1 (408 aa).

The ABC transporter domain maps to 140 to 374 (IEIKNLSFKY…KEFLRNIQLD (235 aa)). 174-181 (GHNGSGKS) serves as a coordination point for ATP.

The protein belongs to the ABC transporter superfamily. Energy-coupling factor EcfA family. Forms a stable energy-coupling factor (ECF) transporter complex composed of 2 membrane-embedded substrate-binding proteins (S component), 2 ATP-binding proteins (A component) and 2 transmembrane proteins (T component).

The protein resides in the cell membrane. Its function is as follows. ATP-binding (A) component of a common energy-coupling factor (ECF) ABC-transporter complex. Unlike classic ABC transporters this ECF transporter provides the energy necessary to transport a number of different substrates. The sequence is that of Energy-coupling factor transporter ATP-binding protein EcfA1 from Mycoplasma capricolum subsp. capricolum (strain California kid / ATCC 27343 / NCTC 10154).